The primary structure comprises 104 residues: UPF0473 protein LJ_0477 (104 aa).

It belongs to the UPF0473 family.

The sequence is that of UPF0473 protein LJ_0477 from Lactobacillus johnsonii (strain CNCM I-12250 / La1 / NCC 533).